A 1088-amino-acid polypeptide reads, in one-letter code: Restriction of telomere capping protein 1 (1088 aa).

Positions 26–56 (NSSTPQSHEISPSSSLSSSRSKKQTSQYNTQ) are disordered. Low complexity predominate over residues 27–44 (SSTPQSHEISPSSSLSSS). 7 WD repeats span residues 131 to 170 (APNKLINVNTIKTFADTIATGLSNGVVSIYKISPNGQSKV), 176 to 215 (DHNRTINSLDFIESENQLLSGSQDGTIKLWDLRSSSTKPV), 222 to 266 (LHSD…GGKV), 275 to 314 (LHTGPALSLHIHPEKELVVTGGRDKRISIFNYGERQSRNT), 367 to 417 (DPTI…TFSS), 432 to 473 (IEDL…TTEE), and 502 to 546 (DKPQ…SSIP). Positions 537–560 (DSATSSSSIPNMQVSSSRPKLTRN) are enriched in polar residues. The tract at residues 537 to 597 (DSATSSSSIP…SPQYKKNNPP (61 aa)) is disordered. Over residues 561–572 (TSQTTQDSSSSQ) the composition is skewed to low complexity. Over residues 582-593 (ASQTYSSPQYKK) the composition is skewed to polar residues. One copy of the WD 8 repeat lies at 631–671 (STPDGFTLVDVCLLNASVAASVGNNRTSQIWRLLAVSIQEE). A compositionally biased stretch (polar residues) spans 709–732 (AETTNSNFVESFKSTSTSGSQFGK). Disordered regions lie at residues 709-751 (AETT…GNLM), 764-829 (SATS…FSPP), and 844-871 (SLASSPKSVRGPSGVKSHISRSRPSPPV). Residues 769–794 (KFKEQERKEDESQKAQSIKDENERAS) show a composition bias toward basic and acidic residues. Positions 796–806 (HSKSAPISISS) are enriched in polar residues. The RING-type; degenerate zinc-finger motif lies at 1040–1083 (CVYCNEPCKGLAVTVGLKCGHHGHFGCLKEWFIEDQNTECPGGC).

It belongs to the WD repeat RTC1 family.

It is found in the vacuole. In terms of biological role, may be involved in a process influencing telomere capping. In Candida albicans (strain WO-1) (Yeast), this protein is Restriction of telomere capping protein 1 (RTC1).